Here is a 405-residue protein sequence, read N- to C-terminus: MKRTFILMLDSFGVGAATDADKFGDVGSDTFGHIAQACADGKADIGRQGPLKLPNLARFGLGHAGFESTGKFAAGFADNVEVIGAYGHADELSSGKDTPSGHWEMAGVPVLYEWGYFSDLTNSFPKELTDKILERAGLDGFLGNCHASGTQILEELGEEHMKTGKPIFYTSADSVFQIACHEESFGVENLYNLCKIAREELEPYNIGRVIARPFVGTGPADFARTGNRHDYAVLPPAPTVLDKLKDAGGEVVSIGKISDIYAHSGITQQFKATGLEELFDETLAQIKRAGDNTIVFTNFVDFDSHYGHRRDTAGYAKALEYFDSRLPELLAILQPEDLVIFTADHGCDPTWVGTEHTRERVPVLAYGAGLSAGSLGRRKSFADIGQSIASYFKLEPMNYGESFIN.

The Mn(2+) site is built by aspartate 10, aspartate 303, histidine 308, aspartate 344, histidine 345, and histidine 356.

Belongs to the phosphopentomutase family. Mn(2+) serves as cofactor.

The protein localises to the cytoplasm. The enzyme catalyses 2-deoxy-alpha-D-ribose 1-phosphate = 2-deoxy-D-ribose 5-phosphate. It carries out the reaction alpha-D-ribose 1-phosphate = D-ribose 5-phosphate. The protein operates within carbohydrate degradation; 2-deoxy-D-ribose 1-phosphate degradation; D-glyceraldehyde 3-phosphate and acetaldehyde from 2-deoxy-alpha-D-ribose 1-phosphate: step 1/2. Its function is as follows. Isomerase that catalyzes the conversion of deoxy-ribose 1-phosphate (dRib-1-P) and ribose 1-phosphate (Rib-1-P) to deoxy-ribose 5-phosphate (dRib-5-P) and ribose 5-phosphate (Rib-5-P), respectively. The chain is Phosphopentomutase from Shewanella frigidimarina (strain NCIMB 400).